The sequence spans 482 residues: F-box/LRR-repeat protein At3g58930 (482 aa).

Residues 1–47 (MDRVSNLPDGVRGHILSFLPAKHIALTSVLSKSWLNLWKLIPILDID) form the F-box domain. LRR repeat units lie at residues 122–150 (SYED…KIRN), 175–200 (SDLI…RMAS), 222–248 (GTGC…NYSD), 313–344 (ILYL…GIKS), and 345–370 (EEGR…IIEG).

This Arabidopsis thaliana (Mouse-ear cress) protein is F-box/LRR-repeat protein At3g58930.